A 109-amino-acid chain; its full sequence is Protein reprimo (109 aa).

Residues Asn7 and Asn18 are each glycosylated (N-linked (GlcNAc...) asparagine). The helical transmembrane segment at 56–76 threads the bilayer; that stretch reads VVQIAVMCVLSLTVVFGIFFL. Position 98 is a phosphoserine (Ser98).

It belongs to the reprimo family.

The protein localises to the cytoplasm. It is found in the membrane. May be involved in the regulation of p53-dependent G2 arrest of the cell cycle. Seems to induce cell cycle arrest by inhibiting CDK1 activity and nuclear translocation of the CDC2 cyclin B1 complex. The chain is Protein reprimo (RPRM) from Homo sapiens (Human).